The sequence spans 557 residues: 6-phosphofructo-2-kinase/fructose-2,6-bisphosphatase 2 (557 aa).

Low complexity predominate over residues 1–16 (MSENSTFSTEDSSSSS). Residues 1–21 (MSENSTFSTEDSSSSSYKPHA) are disordered. At Ser-2 the chain carries N-acetylserine. The interval 2–251 (SENSTFSTED…VYYLMNIHVH (250 aa)) is 6-phosphofructo-2-kinase. At Ser-32 the chain carries Phosphoserine; by PKA. Residue 48–56 (GLPARGKTY) coordinates ATP. The beta-D-fructose 6-phosphate site is built by Arg-81 and Arg-105. The active site involves Asp-131. Beta-D-fructose 6-phosphate is bound by residues Thr-133 and Arg-139. Cys-161 is a catalytic residue. 170–175 (NILEVK) is a binding site for ATP. Residues Lys-175, Arg-196, and Tyr-200 each contribute to the beta-D-fructose 6-phosphate site. The segment at 252–557 (PRTIYLCRHG…PSMASLTLLS (306 aa)) is fructose-2,6-bisphosphatase. Arg-259 contacts beta-D-fructose 2,6-bisphosphate. The Tele-phosphohistidine intermediate role is filled by His-260. Residues Asn-266 and Gly-272 each coordinate beta-D-fructose 2,6-bisphosphate. The Proton donor/acceptor role is filled by Glu-329. Positions 340, 354, 358, 369, 395, and 399 each coordinate beta-D-fructose 2,6-bisphosphate. 351–354 (FALR) is an ATP binding site. ATP is bound by residues 395–399 (QAVMR) and Tyr-431. Residues 449–495 (RDKPTHNFPKSQTPVRMRRNSFTPLSSSNTIRRPRNYSVGSRPLKPL) are disordered. Polar residues predominate over residues 456-479 (FPKSQTPVRMRRNSFTPLSSSNTI). Ser-469 bears the Phosphoserine mark. A Phosphothreonine modification is found at Thr-471. Thr-478 bears the Phosphothreonine; by PKC mark. 2 positions are modified to phosphoserine: Ser-486 and Ser-496.

In the C-terminal section; belongs to the phosphoglycerate mutase family. In terms of assembly, homodimer. Forms a heterodimer with PFKFB3. Phosphorylation by AMPK stimulates activity.

The catalysed reaction is beta-D-fructose 2,6-bisphosphate + H2O = beta-D-fructose 6-phosphate + phosphate. It carries out the reaction beta-D-fructose 6-phosphate + ATP = beta-D-fructose 2,6-bisphosphate + ADP + H(+). Phosphorylation results in the activation of the kinase activity. In terms of biological role, synthesis and degradation of fructose 2,6-bisphosphate. The polypeptide is 6-phosphofructo-2-kinase/fructose-2,6-bisphosphatase 2 (Pfkfb2) (Rattus norvegicus (Rat)).